Consider the following 248-residue polypeptide: 1-(5-phosphoribosyl)-5-[(5-phosphoribosylamino)methylideneamino] imidazole-4-carboxamide isomerase (248 aa).

Residue Asp-8 is the Proton acceptor of the active site. Asp-127 acts as the Proton donor in catalysis.

It belongs to the HisA/HisF family.

It is found in the cytoplasm. It catalyses the reaction 1-(5-phospho-beta-D-ribosyl)-5-[(5-phospho-beta-D-ribosylamino)methylideneamino]imidazole-4-carboxamide = 5-[(5-phospho-1-deoxy-D-ribulos-1-ylimino)methylamino]-1-(5-phospho-beta-D-ribosyl)imidazole-4-carboxamide. It participates in amino-acid biosynthesis; L-histidine biosynthesis; L-histidine from 5-phospho-alpha-D-ribose 1-diphosphate: step 4/9. This is 1-(5-phosphoribosyl)-5-[(5-phosphoribosylamino)methylideneamino] imidazole-4-carboxamide isomerase from Thermotoga neapolitana (strain ATCC 49049 / DSM 4359 / NBRC 107923 / NS-E).